Here is a 425-residue protein sequence, read N- to C-terminus: Pleckstrin homology domain-containing family A member 2 (425 aa).

The PH 1 domain occupies 7 to 113 (QNRICGFLDI…WVEALNQASK (107 aa)). Residue lysine 141 forms a Glycyl lysine isopeptide (Lys-Gly) (interchain with G-Cter in SUMO2) linkage. A Phosphoserine modification is found at serine 184. One can recognise a PH 2 domain in the interval 198 to 298 (PLIKSGYCVK…WIKEIGAAVQ (101 aa)). Phosphoserine is present on residues serine 314 and serine 349. A disordered region spans residues 374–410 (AEDSLFTPRLGESSTSAVLPSSRIRHRSEPQHPKEKP). The span at 400 to 410 (RSEPQHPKEKP) shows a compositional bias: basic and acidic residues.

As to quaternary structure, binds MPDZ and PTPN13.

It localises to the cytoplasm. It is found in the cell membrane. The protein resides in the nucleus. Binds specifically to phosphatidylinositol 3,4-diphosphate (PtdIns3,4P2), but not to other phosphoinositides. May recruit other proteins to the plasma membrane. The sequence is that of Pleckstrin homology domain-containing family A member 2 (PLEKHA2) from Bos taurus (Bovine).